Consider the following 405-residue polypeptide: Probable tRNA sulfurtransferase (405 aa).

Positions 60–165 constitute a THUMP domain; sequence ETIDQRLKLV…QDAIYISNQL (106 aa). ATP-binding positions include 183–184, 208–209, Arg-265, Gly-287, and Gln-296; these read ML and HF.

This sequence belongs to the ThiI family.

The protein resides in the cytoplasm. The enzyme catalyses [ThiI sulfur-carrier protein]-S-sulfanyl-L-cysteine + a uridine in tRNA + 2 reduced [2Fe-2S]-[ferredoxin] + ATP + H(+) = [ThiI sulfur-carrier protein]-L-cysteine + a 4-thiouridine in tRNA + 2 oxidized [2Fe-2S]-[ferredoxin] + AMP + diphosphate. The catalysed reaction is [ThiS sulfur-carrier protein]-C-terminal Gly-Gly-AMP + S-sulfanyl-L-cysteinyl-[cysteine desulfurase] + AH2 = [ThiS sulfur-carrier protein]-C-terminal-Gly-aminoethanethioate + L-cysteinyl-[cysteine desulfurase] + A + AMP + 2 H(+). Its pathway is cofactor biosynthesis; thiamine diphosphate biosynthesis. In terms of biological role, catalyzes the ATP-dependent transfer of a sulfur to tRNA to produce 4-thiouridine in position 8 of tRNAs, which functions as a near-UV photosensor. Also catalyzes the transfer of sulfur to the sulfur carrier protein ThiS, forming ThiS-thiocarboxylate. This is a step in the synthesis of thiazole, in the thiamine biosynthesis pathway. The sulfur is donated as persulfide by IscS. The sequence is that of Probable tRNA sulfurtransferase from Lactobacillus johnsonii (strain CNCM I-12250 / La1 / NCC 533).